A 496-amino-acid chain; its full sequence is MEKSQGYLELDKSWRHDFLYPLIFQEYIYALAHEQGLNRSILVENTDHDNKYSSLIVKRLITLIYQQNHFLIFDNDSNQNPFWKHNNNLYSQTISEGFVIIVEIPFSPRFVDSLEEKKKILKSNNLRSIHSIFPFLEDQILHLNFVANILIPYPIHLEIVVQSLRYRVKDASSLHLLRFFLFTLNKSISSFSKRNQRFFLFLYNSHVYEYESTFLFLRNKTSHLRSTSSGAFLERIFFYGKIKHLIEVFANDFQAILWLFKDPFMHYVRYQGKSILASKRTSLRMNKWKYYLVNFWQCQFYVWSQPGRVSINQLSNHSLDFLGYLSSVRRNPLAVRSQMLENSFLTDNAIKKFDIIVLLISLIGSLAKAKFCNVLGHPLSKPARADSSDSDIIERFVRICRNLSHYHSGSSKKKSLYRIKYILRLSCARTLARKHKTTVRSFLKRLGSELLEEFLTEDGQVISLIFPRTSSTSWRLYRGGIWYLDITCINDLANHE.

The protein belongs to the intron maturase 2 family. MatK subfamily.

It localises to the plastid. It is found in the chloroplast. Usually encoded in the trnK tRNA gene intron. Probably assists in splicing its own and other chloroplast group II introns. The chain is Maturase K from Paeonia officinalis (Common peony).